The chain runs to 377 residues: MTDNSKTRVVVGMSGGVDSSVVAYLLKQQGYDVVGVFMKNWDDTDENGYCTATEDYKDVAKVAAKIGIPYYSVNFEKEYWDRVFTYFLDEYKKGRTPNPDVICNNEIKFKAFLDYAISLGADYVATGHYAQVERDENGHQHLLRATDSNKDQTYFLSQLSAEQLDRVMFPLGGMIKPEVRKVAEEAGLSVYDKKDSVGICFIGEKNFREFLGNYLPAKAGKMMTLDGEVKGEHAGLMYYTIGQRRGLGIGGGSKNNEPWFVVGKDLSKNILYVGQGFENSHLYAASLDASDMHFVNKLGEERGRDFRCTAKFRYRAQDVPVTVHFSEDFSKVTVDFDDPARAITPGQALVLYDGEECIGGGIIDAAYNSEKKMLQYI.

ATP-binding positions include 12 to 19 and M38; that span reads GMSGGVDS. The interval 98-100 is interaction with target base in tRNA; that stretch reads NPD. C103 (nucleophile) is an active-site residue. Residues C103 and C200 are joined by a disulfide bond. Residue G127 coordinates ATP. The segment at 150 to 152 is interaction with tRNA; it reads KDQ. Catalysis depends on C200, which acts as the Cysteine persulfide intermediate. Residues 313 to 314 form an interaction with tRNA region; sequence RY.

This sequence belongs to the MnmA/TRMU family.

The protein resides in the cytoplasm. It catalyses the reaction S-sulfanyl-L-cysteinyl-[protein] + uridine(34) in tRNA + AH2 + ATP = 2-thiouridine(34) in tRNA + L-cysteinyl-[protein] + A + AMP + diphosphate + H(+). Its function is as follows. Catalyzes the 2-thiolation of uridine at the wobble position (U34) of tRNA, leading to the formation of s(2)U34. The protein is tRNA-specific 2-thiouridylase MnmA of Pediococcus pentosaceus (strain ATCC 25745 / CCUG 21536 / LMG 10740 / 183-1w).